The sequence spans 388 residues: 5-hydroxytryptamine receptor 1B (388 aa).

Positions 1–29 (MEQPSRLCSPPASGSLTSSQTNHSTFPNP) are disordered. The Extracellular segment spans residues 1–45 (MEQPSRLCSPPASGSLTSSQTNHSTFPNPNCSAPDLEPYQDSIAL). The span at 12–29 (ASGSLTSSQTNHSTFPNP) shows a compositional bias: polar residues. 2 N-linked (GlcNAc...) asparagine glycosylation sites follow: Asn-22 and Asn-30. A helical membrane pass occupies residues 46–71 (PWKVLLATFLGLITLGTTLSNAFVIA). Residues 72–85 (TVSRTRKLHTPANY) are Cytoplasmic-facing. Residues 86–110 (LIASLAVTDLLVSILVMPISTMYTV) form a helical membrane-spanning segment. The Extracellular segment spans residues 111–118 (TGRWTLGQ). The helical transmembrane segment at 119–144 (VVCDFWLSSDITCCTASILHLCVIAL) threads the bilayer. The cysteines at positions 121 and 197 are disulfide-linked. Ergotamine contacts are provided by Asp-128 and Thr-133. A DRY motif; important for ligand-induced conformation changes and signaling motif is present at residues 145-147 (DRY). Residues 145–164 (DRYWAITDAVEYSAKRTPKR) are Cytoplasmic-facing. A helical membrane pass occupies residues 165 to 183 (AAGMIIMVWVFSVSISMPP). Over 184 to 203 (LFWRQAKAEEVADCSVNTDH) the chain is Extracellular. Val-199 contributes to the ergotamine binding site. A helical transmembrane segment spans residues 204 to 227 (ILYTVYSTVGAFYFPTLLLIALYG). Over 228-313 (RIYVEARSRI…AARERKATRT (86 aa)) the chain is Cytoplasmic. The tract at residues 249-282 (LTRAQLITDSPGSSSSGTSINSRAPEGPSESGSP) is disordered. Low complexity predominate over residues 255–270 (ITDSPGSSSSGTSINS). The chain crosses the membrane as a helical span at residues 314–335 (LGIILGAFIVCWLPFFIISLAL). Topologically, residues 336 to 345 (PICDDACWFH) are extracellular. Residues 346–368 (LAIFDFFNWLGYLNSLINPIIYT) traverse the membrane as a helical segment. The short motif at 363 to 367 (NPIIY) is the NPxxY motif; important for ligand-induced conformation changes and signaling element. The Cytoplasmic portion of the chain corresponds to 369–388 (KSNDDFKQAFQKLMRFRRTS).

Belongs to the G-protein coupled receptor 1 family. Homodimer. Heterodimer with HTR1D. Phosphorylated. Desensitization of the receptor may be mediated by its phosphorylation. In terms of processing, palmitoylated.

Its subcellular location is the cell membrane. Its function is as follows. G-protein coupled receptor for 5-hydroxytryptamine (serotonin). Also functions as a receptor for ergot alkaloid derivatives, various anxiolytic and antidepressant drugs and other psychoactive substances, such as lysergic acid diethylamide (LSD). Ligand binding causes a conformation change that triggers signaling via guanine nucleotide-binding proteins (G proteins) and modulates the activity of downstream effectors, such as adenylate cyclase. HTR1B is coupled to G(i)/G(o) G alpha proteins and mediates inhibitory neurotransmission by inhibiting adenylate cyclase activity. Arrestin family members inhibit signaling via G proteins and mediate activation of alternative signaling pathways. Regulates the release of 5-hydroxytryptamine, dopamine and acetylcholine in the brain, and thereby affects neural activity, nociceptive processing, pain perception, mood and behavior. Besides, plays a role in vasoconstriction of cerebral arteries. The polypeptide is 5-hydroxytryptamine receptor 1B (HTR1B) (Didelphis virginiana (North American opossum)).